Here is a 237-residue protein sequence, read N- to C-terminus: HTH-type transcriptional regulator GmuR (237 aa).

The region spanning 1 to 69 (MNKYEIIANE…RGHGTFIIQS (69 aa)) is the HTH gntR-type domain. Residues 29 to 48 (EVSLAKEFNSSRMTMKRALD) constitute a DNA-binding region (H-T-H motif).

The protein resides in the cytoplasm. Its function is as follows. Transcriptional repressor of the gmuBACDREFG operon which is involved in the uptake and degradation of glucomannan. The sequence is that of HTH-type transcriptional regulator GmuR (gmuR) from Bacillus subtilis (strain 168).